Here is a 317-residue protein sequence, read N- to C-terminus: Ribonuclease H2 subunit A (317 aa).

The RNase H type-2 domain occupies 43–270 (PCCLGVDEAG…AKDMLETKGG (228 aa)). A divalent metal cation is bound by residues Asp-49, Glu-50, and Asp-166.

The protein belongs to the RNase HII family. Eukaryotic subfamily. The cofactor is Mn(2+). Mg(2+) serves as cofactor.

It catalyses the reaction Endonucleolytic cleavage to 5'-phosphomonoester.. Functionally, endonuclease that specifically degrades the RNA of RNA-DNA hybrids. Participates in DNA replication. The polypeptide is Ribonuclease H2 subunit A (rnh-201) (Neurospora crassa (strain ATCC 24698 / 74-OR23-1A / CBS 708.71 / DSM 1257 / FGSC 987)).